A 282-amino-acid polypeptide reads, in one-letter code: Putative SWIB domain-containing protein 070L (282 aa).

Residues methionine 1–lysine 16 show a composition bias toward low complexity. The interval methionine 1–asparagine 21 is disordered. The SWIB/MDM2 domain maps to glycine 97 to glutamate 181. The disordered stretch occupies residues threonine 199–lysine 282. Over residues glycine 262 to lysine 275 the composition is skewed to basic and acidic residues.

Belongs to the IIV-6 306R family.

This chain is Putative SWIB domain-containing protein 070L, found in Invertebrate iridescent virus 3 (IIV-3).